A 344-amino-acid chain; its full sequence is N-acetyl-gamma-glutamyl-phosphate reductase (344 aa).

The active site involves Cys-149.

It belongs to the NAGSA dehydrogenase family. Type 1 subfamily.

The protein resides in the cytoplasm. It catalyses the reaction N-acetyl-L-glutamate 5-semialdehyde + phosphate + NADP(+) = N-acetyl-L-glutamyl 5-phosphate + NADPH + H(+). Its pathway is amino-acid biosynthesis; L-arginine biosynthesis; N(2)-acetyl-L-ornithine from L-glutamate: step 3/4. Catalyzes the NADPH-dependent reduction of N-acetyl-5-glutamyl phosphate to yield N-acetyl-L-glutamate 5-semialdehyde. This is N-acetyl-gamma-glutamyl-phosphate reductase from Syntrophobacter fumaroxidans (strain DSM 10017 / MPOB).